We begin with the raw amino-acid sequence, 219 residues long: MSKAQAVRRIGILGGTFDPVHIGHLRSALEVTEFMGLEELRLLPNARPPHRDTPQVAAEDRLAMVREAVQGVERLSVDARELERDKPSYTIDTLESVRAELGADDQLFLVLGWDAFCGLPGWHRWEELLQHCHILVLQRPDADVEPPDELRNLLAARSESDPTAMSGPAGSISFVWQTPLAVSATQIRQLLASGRSVRFLVPDAVLAYIEAHELYRAPN.

Belongs to the NadD family.

The enzyme catalyses nicotinate beta-D-ribonucleotide + ATP + H(+) = deamido-NAD(+) + diphosphate. The protein operates within cofactor biosynthesis; NAD(+) biosynthesis; deamido-NAD(+) from nicotinate D-ribonucleotide: step 1/1. Functionally, catalyzes the reversible adenylation of nicotinate mononucleotide (NaMN) to nicotinic acid adenine dinucleotide (NaAD). In Pseudomonas putida (strain W619), this protein is Probable nicotinate-nucleotide adenylyltransferase.